Consider the following 200-residue polypeptide: LexA repressor (200 aa).

Residues 28–48 (RAEISNRLGFRSANAAEEHLK) constitute a DNA-binding region (H-T-H motif). Catalysis depends on for autocatalytic cleavage activity residues Ser-121 and Lys-158.

Belongs to the peptidase S24 family. In terms of assembly, homodimer.

It carries out the reaction Hydrolysis of Ala-|-Gly bond in repressor LexA.. Its function is as follows. Represses a number of genes involved in the response to DNA damage (SOS response), including recA and lexA. In the presence of single-stranded DNA, RecA interacts with LexA causing an autocatalytic cleavage which disrupts the DNA-binding part of LexA, leading to derepression of the SOS regulon and eventually DNA repair. In Hahella chejuensis (strain KCTC 2396), this protein is LexA repressor.